Reading from the N-terminus, the 317-residue chain is Transaldolase (317 aa).

The active-site Schiff-base intermediate with substrate is the K132.

This sequence belongs to the transaldolase family. Type 1 subfamily. As to quaternary structure, homodimer.

The protein resides in the cytoplasm. It catalyses the reaction D-sedoheptulose 7-phosphate + D-glyceraldehyde 3-phosphate = D-erythrose 4-phosphate + beta-D-fructose 6-phosphate. The protein operates within carbohydrate degradation; pentose phosphate pathway; D-glyceraldehyde 3-phosphate and beta-D-fructose 6-phosphate from D-ribose 5-phosphate and D-xylulose 5-phosphate (non-oxidative stage): step 2/3. Functionally, transaldolase is important for the balance of metabolites in the pentose-phosphate pathway. The polypeptide is Transaldolase (Actinobacillus succinogenes (strain ATCC 55618 / DSM 22257 / CCUG 43843 / 130Z)).